Consider the following 643-residue polypeptide: Cell pattern formation-associated protein asm-1 (643 aa).

The interval 1 to 37 (MNPNTPADVYYGQMSQGSSMPVTTVPSHSHYASQQPP) is disordered. A compositionally biased stretch (polar residues) spans 13 to 33 (QMSQGSSMPVTTVPSHSHYAS). The 107-residue stretch at 116–222 (RVTATLWEDE…HNIGALLYHP (107 aa)) folds into the HTH APSES-type domain. The H-T-H motif DNA-binding region spans 150–171 (GTKLLNVAGMTRGRRDGILKSE). A disordered region spans residues 229–627 (SQVMAAAEQR…GSLPSPTYTA (399 aa)). Over residues 306–335 (DGYQWSQQSMSGTQGNSSLSLDTSLGSNAR) the composition is skewed to polar residues. Residues 336-349 (SMPSTPATTPPGST) show a composition bias toward low complexity. Residues 350-367 (IQSMQNYPPVSQSYESSR) are compositionally biased toward polar residues. The segment covering 368–391 (QMYQGQSAQQAQYQSQQHYSSQPQ) has biased composition (low complexity). Polar residues-rich tracts occupy residues 471-481 (GSYNYNTQAVN), 529-551 (QPSS…TQGN), and 563-577 (SLPN…VMNG). Residues 583–612 (KRGRDDDDDGGRPTTSAPNLGPGMDMKRRK) are nuclear localization domain.

This sequence belongs to the EFG1/PHD1/stuA family.

The protein localises to the nucleus. In terms of biological role, transcription factor that regulates asexual reproduction. Binds the StuA-response elements (StRE) with the consensus sequence 5'-(A/T)CGCG(T/A)N(A/C)-3' at the promoters of target genes. Required for rapid conidial germination, normal vegetative morphology, and protoperithecium formation. This Neurospora crassa (strain ATCC 24698 / 74-OR23-1A / CBS 708.71 / DSM 1257 / FGSC 987) protein is Cell pattern formation-associated protein asm-1.